Reading from the N-terminus, the 89-residue chain is Small ribosomal subunit protein uS15 (89 aa).

Belongs to the universal ribosomal protein uS15 family. In terms of assembly, part of the 30S ribosomal subunit. Forms a bridge to the 50S subunit in the 70S ribosome, contacting the 23S rRNA.

Functionally, one of the primary rRNA binding proteins, it binds directly to 16S rRNA where it helps nucleate assembly of the platform of the 30S subunit by binding and bridging several RNA helices of the 16S rRNA. Forms an intersubunit bridge (bridge B4) with the 23S rRNA of the 50S subunit in the ribosome. The polypeptide is Small ribosomal subunit protein uS15 (Chlamydia abortus (strain DSM 27085 / S26/3) (Chlamydophila abortus)).